Reading from the N-terminus, the 553-residue chain is Putative transport protein YidE (553 aa).

The next 5 helical transmembrane spans lie at 4–24 (IALT…IGNV), 28–48 (GIGL…HFVS), 65–85 (FGLI…FFAS), 95–115 (LFAV…HKLF), and 158–178 (MSYA…MWML). 2 consecutive RCK C-terminal domains span residues 191 to 276 (QQHE…VIGQ) and 279 to 361 (DTSL…VLGN). Helical transmembrane passes span 371–391 (MLPV…PVFV), 393–413 (GFPA…ALIL), 439–459 (IVLF…NTLV), 464–484 (LSWI…VGIL), 493–513 (YLTM…LAFA), and 533–553 (LVMF…WSIG).

This sequence belongs to the AAE transporter (TC 2.A.81) family. YidE subfamily.

Its subcellular location is the cell membrane. The sequence is that of Putative transport protein YidE from Shigella boydii serotype 18 (strain CDC 3083-94 / BS512).